Here is a 217-residue protein sequence, read N- to C-terminus: Ribonuclease HII (217 aa).

The RNase H type-2 domain maps to Arg27–Cys216. Positions 33, 34, and 125 each coordinate a divalent metal cation.

The protein belongs to the RNase HII family. It depends on Mn(2+) as a cofactor. Mg(2+) serves as cofactor.

The protein localises to the cytoplasm. It carries out the reaction Endonucleolytic cleavage to 5'-phosphomonoester.. In terms of biological role, endonuclease that specifically degrades the RNA of RNA-DNA hybrids. This is Ribonuclease HII from Geobacter sulfurreducens (strain ATCC 51573 / DSM 12127 / PCA).